The chain runs to 114 residues: uncharacterized protein (114 aa).

Disordered stretches follow at residues 26–45 and 72–98; these read GMKQKRKPASSEPTPEDALG and PKGSEPPGRSAGLQGATERSGRPSVQA.

This is an uncharacterized protein from Homo sapiens (Human).